Consider the following 87-residue polypeptide: UPF0250 protein BUAPTUC7_482 (87 aa).

This sequence belongs to the UPF0250 family.

The protein is UPF0250 protein BUAPTUC7_482 of Buchnera aphidicola subsp. Acyrthosiphon pisum (strain Tuc7).